The primary structure comprises 96 residues: Aspartyl/glutamyl-tRNA(Asn/Gln) amidotransferase subunit C (96 aa).

Belongs to the GatC family. Heterotrimer of A, B and C subunits.

It catalyses the reaction L-glutamyl-tRNA(Gln) + L-glutamine + ATP + H2O = L-glutaminyl-tRNA(Gln) + L-glutamate + ADP + phosphate + H(+). The catalysed reaction is L-aspartyl-tRNA(Asn) + L-glutamine + ATP + H2O = L-asparaginyl-tRNA(Asn) + L-glutamate + ADP + phosphate + 2 H(+). Functionally, allows the formation of correctly charged Asn-tRNA(Asn) or Gln-tRNA(Gln) through the transamidation of misacylated Asp-tRNA(Asn) or Glu-tRNA(Gln) in organisms which lack either or both of asparaginyl-tRNA or glutaminyl-tRNA synthetases. The reaction takes place in the presence of glutamine and ATP through an activated phospho-Asp-tRNA(Asn) or phospho-Glu-tRNA(Gln). This is Aspartyl/glutamyl-tRNA(Asn/Gln) amidotransferase subunit C from Aliarcobacter butzleri (strain RM4018) (Arcobacter butzleri).